A 68-amino-acid chain; its full sequence is MTRQEELAAARAALHDLMTGKRVATVQKDGRRVEFTATSVSDLKKYIAELEVQTGMTQRRRGPAGFYV.

Belongs to the lambda phage gpW family. In terms of assembly, monomer in solution, assembles into hexamers on the prohead. May bind FII and portal protein (Potential).

The protein resides in the virion. In terms of biological role, plays a role in morphogenesis of the virion head after genome packaging. Presumably interacts with the portal vertex to stabilize the packaged DNA within the head after packaging. Probably binds to the head-tail connector protein FII. The sequence is that of Head completion protein (W) from Escherichia coli (Bacteriophage lambda).